We begin with the raw amino-acid sequence, 263 residues long: Endonuclease 8 (263 aa).

The active-site Schiff-base intermediate with DNA is the Pro-2. Glu-3 acts as the Proton donor in catalysis. Lys-53 functions as the Proton donor; for beta-elimination activity in the catalytic mechanism. Residues Gln-70, Arg-125, and Asn-169 each coordinate DNA. The FPG-type zinc finger occupies 229-263 (KVFHRDGELCERCGGIIEKTTLSSRPFYWCPGCQH). Catalysis depends on Arg-253, which acts as the Proton donor; for delta-elimination activity.

The protein belongs to the FPG family. The cofactor is Zn(2+).

It catalyses the reaction 2'-deoxyribonucleotide-(2'-deoxyribose 5'-phosphate)-2'-deoxyribonucleotide-DNA = a 3'-end 2'-deoxyribonucleotide-(2,3-dehydro-2,3-deoxyribose 5'-phosphate)-DNA + a 5'-end 5'-phospho-2'-deoxyribonucleoside-DNA + H(+). In terms of biological role, involved in base excision repair of DNA damaged by oxidation or by mutagenic agents. Acts as a DNA glycosylase that recognizes and removes damaged bases. Has a preference for oxidized pyrimidines, such as thymine glycol, 5,6-dihydrouracil and 5,6-dihydrothymine. Has AP (apurinic/apyrimidinic) lyase activity and introduces nicks in the DNA strand. Cleaves the DNA backbone by beta-delta elimination to generate a single-strand break at the site of the removed base with both 3'- and 5'-phosphates. The chain is Endonuclease 8 from Shigella flexneri serotype 5b (strain 8401).